A 597-amino-acid chain; its full sequence is Arginine--tRNA ligase (597 aa).

Positions 125 to 135 (PNTNKPLHLGH) match the 'HIGH' region motif.

The protein belongs to the class-I aminoacyl-tRNA synthetase family. In terms of assembly, monomer.

The protein resides in the cytoplasm. It catalyses the reaction tRNA(Arg) + L-arginine + ATP = L-arginyl-tRNA(Arg) + AMP + diphosphate. The sequence is that of Arginine--tRNA ligase from Bacteroides fragilis (strain ATCC 25285 / DSM 2151 / CCUG 4856 / JCM 11019 / LMG 10263 / NCTC 9343 / Onslow / VPI 2553 / EN-2).